A 426-amino-acid polypeptide reads, in one-letter code: Dihydroorotase (426 aa).

Residues H58 and H60 each coordinate Zn(2+). Residues 60-62 (HLR) and N92 each bind substrate. Zn(2+)-binding residues include D150, H177, and H230. N276 contacts substrate. A Zn(2+)-binding site is contributed by D303. The active site involves D303. Residues H307 and 321-322 (FG) contribute to the substrate site.

The protein belongs to the metallo-dependent hydrolases superfamily. DHOase family. Class I DHOase subfamily. Zn(2+) serves as cofactor.

It catalyses the reaction (S)-dihydroorotate + H2O = N-carbamoyl-L-aspartate + H(+). The protein operates within pyrimidine metabolism; UMP biosynthesis via de novo pathway; (S)-dihydroorotate from bicarbonate: step 3/3. In terms of biological role, catalyzes the reversible cyclization of carbamoyl aspartate to dihydroorotate. In Listeria monocytogenes serotype 4a (strain HCC23), this protein is Dihydroorotase.